Consider the following 923-residue polypeptide: Progesterone receptor (923 aa).

Positions 1-11 (MTELQAKDPRT) are enriched in basic and acidic residues. A disordered region spans residues 1–49 (MTELQAKDPRTLHTSGAAPSPTHVGSPLLARLDPDPFQGSQHSDASSVV). The interval 1–164 (MTELQAKDPR…PATKGLLSPL (164 aa)) is AF3; mediates transcriptional activation (in isoform B). The interval 1-556 (MTELQAKDPR…YGFDSLPQKI (556 aa)) is modulating, Pro-Rich. Residue Lys7 forms a Glycyl lysine isopeptide (Lys-Gly) (interchain with G-Cter in SUMO) linkage. Ser20 bears the Phosphoserine mark. Polar residues predominate over residues 38–49 (QGSQHSDASSVV). An LXXL motif 1 motif is present at residues 56 to 60 (LDRLL). The disordered stretch occupies residues 67 to 111 (AQELPDEKTQNQQSLSDVEGAFSGVEASRRRSRNPRAPEKDSRLL). The residue at position 82 (Ser82) is a Phosphoserine. An LXXL motif 2 motif is present at residues 115–119 (LDTLL). Ser130 and Ser162 each carry phosphoserine. The segment at 152-239 (RSVPATKGLL…EGSAGPLLKS (88 aa)) is disordered. Residues 165-304 (MSRPESKAGD…LATTVVDFIH (140 aa)) are mediates transcriptional transrepression (in isoform A). The Nuclear localization signal signature appears at 184-188 (VLPKA). Ser190 and Ser213 each carry phosphoserine. Phosphoserine; by MAPK1 is present on Ser293. Residues 333–371 (AAQVPFAPPRGSPSAPSPPVPCGDFPDCTYPPEGDPKED) are disordered. Residues 338 to 353 (FAPPRGSPSAPSPPVP) are compositionally biased toward pro residues. A Phosphoserine; by MAPK modification is found at Ser344. Residue Lys387 forms a Glycyl lysine isopeptide (Lys-Gly) (interchain with G-Cter in SUMO); alternate linkage. Lys387 participates in a covalent cross-link: Glycyl lysine isopeptide (Lys-Gly) (interchain with G-Cter in ubiquitin); alternate. Ser399 bears the Phosphoserine; by CDK2 mark. A disordered region spans residues 412-435 (TFPDFPLPPRPPRAPPSRPGEAAV). Positions 416-429 (FPLPPRPPRAPPSR) are enriched in pro residues. An AF1; mediates transcriptional activation region spans residues 450–536 (SALECILYKA…VYPPYLNYLR (87 aa)). A Glycyl lysine isopeptide (Lys-Gly) (interchain with G-Cter in SUMO) cross-link involves residue Lys521. 2 NR C4-type zinc fingers span residues 557–577 (CLIC…CGSC) and 593–617 (CAGR…LRKC). Residues 557–629 (CLICGDEASG…AGMVLGGRKF (73 aa)) constitute a DNA-binding region (nuclear receptor). Ser666 carries the post-translational modification Phosphoserine. One can recognise an NR LBD domain in the interval 669 to 903 (QEIQLVPPLI…EFPEMMSEVI (235 aa)). The AF2; mediates transcriptional activation stretch occupies residues 677-923 (LINLLMSIEP…MVKPLLFHKK (247 aa)). Arg756 is a progesterone binding site.

It belongs to the nuclear hormone receptor family. NR3 subfamily. Interacts with SMARD1 and UNC45A. Interacts with CUEDC2; the interaction promotes ubiquitination, decreases sumoylation, and represses transcriptional activity. Interacts with PIAS3; the interaction promotes sumoylation of PR in a hormone-dependent manner, inhibits DNA-binding, and alters nuclear export. Interacts with SP1; the interaction requires ligand-induced phosphorylation on Ser-344. Interacts with PRMT2. Isoform A interacts with NCOR2. Isoform B (but not isoform A) interacts with NCOA2 and NCOA1. Isoform B (but not isoform A) interacts with KLF9. Interacts with GTF2B. Phosphorylated on multiple serine sites. Several of these sites are hormone-dependent. Phosphorylation on Ser-293 is highly hormone-dependent and modulates ubiquitination and sumoylation on Lys-387. Phosphorylation on Ser-344 also requires induction by hormone. Basal phosphorylation on Ser-82, Ser-190 and Ser-399 is increased in response to progesterone and can be phosphorylated in vitro by the CDK2-A1 complex. Increased levels of phosphorylation on Ser-399 also in the presence of EGF, heregulin, IGF, PMA and FBS. Phosphorylation at this site by CDK2 is ligand-independent, and increases nuclear translocation and transcriptional activity. Phosphorylation at Ser-293, but not at Ser-190, is impaired during the G(2)/M phase of the cell cycle. Phosphorylation on Ser-344 by ERK1/2 MAPK is required for interaction with SP1. Post-translationally, sumoylation is hormone-dependent and represses transcriptional activity. Sumoylation on all three sites is enhanced by PIAS3. Desumoylated by SENP1. Sumoylation on Lys-387, the main site of sumoylation, is repressed by ubiquitination on the same site, and modulated by phosphorylation at Ser-293. In terms of processing, ubiquitination is hormone-dependent and represses sumoylation on the same site. Promoted by MAPK-mediated phosphorylation on Ser-293. Ubiquitinated by UBR5, leading to its degradation: UBR5 specifically recognizes and binds ligand-bound PGR when it is not associated with coactivators (NCOAs). In presence of NCOAs, the UBR5-degron is not accessible, preventing its ubiquitination and degradation. Palmitoylated by ZDHHC7 and ZDHHC21. Palmitoylation is required for plasma membrane targeting and for rapid intracellular signaling via ERK and AKT kinases and cAMP generation. As to expression, isoform A and isoform B are expressed in the pituitary.

The protein resides in the nucleus. It localises to the cytoplasm. Functionally, the steroid hormones and their receptors are involved in the regulation of eukaryotic gene expression and affect cellular proliferation and differentiation in target tissues. Depending on the isoform, progesterone receptor functions as a transcriptional activator or repressor. In terms of biological role, ligand-dependent transdominant repressor of steroid hormone receptor transcriptional activity including repression of its isoform B, MR and ER. Transrepressional activity may involve recruitment of corepressor NCOR2. Its function is as follows. Transcriptional activator of several progesteron-dependent promoters in a variety of cell types. Involved in activation of SRC-dependent MAPK signaling on hormone stimulation. This is Progesterone receptor (Pgr) from Rattus norvegicus (Rat).